The sequence spans 294 residues: Acetylglutamate kinase (294 aa).

Residues 60 to 61 (GG), Arg82, and Asn186 each bind substrate.

This sequence belongs to the acetylglutamate kinase family. ArgB subfamily.

The protein localises to the cytoplasm. The catalysed reaction is N-acetyl-L-glutamate + ATP = N-acetyl-L-glutamyl 5-phosphate + ADP. Its pathway is amino-acid biosynthesis; L-arginine biosynthesis; N(2)-acetyl-L-ornithine from L-glutamate: step 2/4. In terms of biological role, catalyzes the ATP-dependent phosphorylation of N-acetyl-L-glutamate. This Methanospirillum hungatei JF-1 (strain ATCC 27890 / DSM 864 / NBRC 100397 / JF-1) protein is Acetylglutamate kinase.